The following is a 390-amino-acid chain: Ankyrin repeat domain-containing protein 63 (390 aa).

ANK repeat units follow at residues 11 to 40 (AGTR…RSII), 46 to 79 (QGRT…AVNL), 83 to 112 (RGRT…DPEA), 116 to 145 (AGNS…RLGL), and 153 to 182 (AGLT…RAAA). Disordered stretches follow at residues 181–213 (AAAA…SPRR) and 226–245 (AGGH…ELAS). Ser-193 carries the post-translational modification Phosphoserine. A Phosphoserine modification is found at Ser-304. Residues 320-377 (VGLSPHPEGCPGSGRLGLRRRSTAPDIPSLVGEASGPESGPELENNALPFSVPGPKPW) are disordered.

The polypeptide is Ankyrin repeat domain-containing protein 63 (Mus musculus (Mouse)).